The sequence spans 492 residues: Bifunctional purine biosynthesis protein PurH (492 aa).

Residues 1–144 (MKKVILSVSD…KNFKHVTTIV (144 aa)) enclose the MGS-like domain.

The protein belongs to the PurH family.

The enzyme catalyses (6R)-10-formyltetrahydrofolate + 5-amino-1-(5-phospho-beta-D-ribosyl)imidazole-4-carboxamide = 5-formamido-1-(5-phospho-D-ribosyl)imidazole-4-carboxamide + (6S)-5,6,7,8-tetrahydrofolate. It catalyses the reaction IMP + H2O = 5-formamido-1-(5-phospho-D-ribosyl)imidazole-4-carboxamide. The protein operates within purine metabolism; IMP biosynthesis via de novo pathway; 5-formamido-1-(5-phospho-D-ribosyl)imidazole-4-carboxamide from 5-amino-1-(5-phospho-D-ribosyl)imidazole-4-carboxamide (10-formyl THF route): step 1/1. It participates in purine metabolism; IMP biosynthesis via de novo pathway; IMP from 5-formamido-1-(5-phospho-D-ribosyl)imidazole-4-carboxamide: step 1/1. The protein is Bifunctional purine biosynthesis protein PurH of Staphylococcus carnosus (strain TM300).